The sequence spans 286 residues: Alpha-ketoglutarate-dependent dioxygenase alkB homolog 3 (286 aa).

The tract at residues 1–38 (MEDKRRRARVQGAWAGPAKSQATAQPAPTAENNLQQRP) is disordered. Positions 20-36 (SQATAQPAPTAENNLQQ) are enriched in polar residues. Residues W115 and 141–143 (YTY) each bind substrate. The Fe2OG dioxygenase domain maps to 172 to 278 (SFNSLLCNLY…RINLTFRTVY (107 aa)). Residue L177 is modified to (4R)-5-hydroxyleucine; alternate. The residue at position 177 (L177) is a (4R)-5-oxoleucine; alternate. 179-181 (NLY) is a binding site for 2-oxoglutarate. Fe cation is bound by residues H191 and D193. D194 serves as a coordination point for substrate. Fe cation is bound at residue H257. 2-oxoglutarate-binding positions include 269–275 (RINLTFR) and R275.

It belongs to the alkB family. In terms of assembly, interacts with the ASCC complex composed of ASCC1, ASCC2 and ASCC3. Interacts directly with ASCC3, and is thereby recruited to the ASCC complex. Interacts with OTUD4; the interaction is direct. Interacts with USP7 and USP9X. Fe(2+) serves as cofactor. Post-translationally, ubiquitinated; undergoes 'Lys-48'-linked polyubiquitination. OTUD4 promotes USP7 and USP9X-dependent deubiquitination of 'Lys-48'-polyubiquitinated ALKBH3 promoting the repair of alkylated DNA lesions.

It is found in the nucleus. It localises to the cytoplasm. The enzyme catalyses an N(1)-methyladenosine in mRNA + 2-oxoglutarate + O2 = an adenosine in mRNA + formaldehyde + succinate + CO2. It carries out the reaction a methylated nucleobase within DNA + 2-oxoglutarate + O2 = a nucleobase within DNA + formaldehyde + succinate + CO2. The catalysed reaction is an N(1)-methyl-2'-deoxyadenosine in single-stranded DNA + 2-oxoglutarate + O2 = a 2'-deoxyadenosine in single-stranded DNA + formaldehyde + succinate + CO2 + H(+). It catalyses the reaction an N(3)-methyl-2'-deoxycytidine in single-stranded DNA + 2-oxoglutarate + O2 = a 2'-deoxycytidine in single-stranded DNA + formaldehyde + succinate + CO2 + H(+). The enzyme catalyses a 3,N(4)-etheno-2'-deoxycytidine in single-stranded DNA + 2-oxoglutarate + O2 + H2O = a 2'-deoxycytidine in single-stranded DNA + glyoxal + succinate + CO2. With respect to regulation, activated by ascorbate. Dioxygenase that mediates demethylation of DNA and RNA containing 1-methyladenosine (m1A). Repairs alkylated DNA containing 1-methyladenosine (m1A) and 3-methylcytosine (m3C) by oxidative demethylation. Has a strong preference for single-stranded DNA. Able to process alkylated m3C within double-stranded regions via its interaction with ASCC3, which promotes DNA unwinding to generate single-stranded substrate needed for ALKBH3. Can repair exocyclic 3,N4-ethenocytosine adducs in single-stranded DNA. Also acts on RNA. Demethylates N(1)-methyladenosine (m1A) RNA, an epigenetic internal modification of messenger RNAs (mRNAs) highly enriched within 5'-untranslated regions (UTRs) and in the vicinity of start codons. Requires molecular oxygen, alpha-ketoglutarate and iron. In Bos taurus (Bovine), this protein is Alpha-ketoglutarate-dependent dioxygenase alkB homolog 3.